Here is a 132-residue protein sequence, read N- to C-terminus: Mini-ribonuclease 3 (132 aa).

D17 is a catalytic residue.

Belongs to the MrnC RNase family. In terms of assembly, homodimer. The cofactor is Mg(2+).

It localises to the cytoplasm. Its function is as follows. Involved in correct processing of both the 5' and 3' ends of 23S rRNA precursor. Processes 30S rRNA precursor transcript even in absence of ribonuclease 3 (Rnc); Rnc processes 30S rRNA into smaller rRNA precursors. The polypeptide is Mini-ribonuclease 3 (Enterococcus faecalis (strain ATCC 700802 / V583)).